A 441-amino-acid polypeptide reads, in one-letter code: UDP-N-acetylmuramoylalanine--D-glutamate ligase (441 aa).

112 to 118 (GTNGKTT) provides a ligand contact to ATP.

It belongs to the MurCDEF family.

The protein localises to the cytoplasm. The catalysed reaction is UDP-N-acetyl-alpha-D-muramoyl-L-alanine + D-glutamate + ATP = UDP-N-acetyl-alpha-D-muramoyl-L-alanyl-D-glutamate + ADP + phosphate + H(+). The protein operates within cell wall biogenesis; peptidoglycan biosynthesis. Cell wall formation. Catalyzes the addition of glutamate to the nucleotide precursor UDP-N-acetylmuramoyl-L-alanine (UMA). This is UDP-N-acetylmuramoylalanine--D-glutamate ligase from Gloeobacter violaceus (strain ATCC 29082 / PCC 7421).